The sequence spans 211 residues: Phosphatidylglycerophosphatase C (211 aa).

Over 1-33 (MATHERRVVFFDLDGTLHQQDMFGSFLRYLLRR) the chain is Cytoplasmic. The helical transmembrane segment at 34–54 (QPLNALLVLPLLPIIAIALLI) threads the bilayer. Topologically, residues 55 to 211 (KGRAARWPMS…TPRGELQQLE (157 aa)) are periplasmic.

Mg(2+) serves as cofactor.

The protein localises to the cell inner membrane. The enzyme catalyses a 1,2-diacyl-sn-glycero-3-phospho-(1'-sn-glycero-3'-phosphate) + H2O = a 1,2-diacyl-sn-glycero-3-phospho-(1'-sn-glycerol) + phosphate. The protein operates within phospholipid metabolism; phosphatidylglycerol biosynthesis; phosphatidylglycerol from CDP-diacylglycerol: step 2/2. Its function is as follows. Lipid phosphatase which dephosphorylates phosphatidylglycerophosphate (PGP) to phosphatidylglycerol (PG). This Escherichia coli (strain K12) protein is Phosphatidylglycerophosphatase C (pgpC).